Reading from the N-terminus, the 308-residue chain is GMP synthase [glutamine-hydrolyzing] subunit B (308 aa).

Positions 1–185 (MDWGRFVEEK…LGLPEKIYNR (185 aa)) constitute a GMPS ATP-PPase domain. An ATP-binding site is contributed by 28–34 (SGGVDSS).

As to quaternary structure, heterodimer composed of a glutamine amidotransferase subunit (A) and a GMP-binding subunit (B).

It catalyses the reaction XMP + L-glutamine + ATP + H2O = GMP + L-glutamate + AMP + diphosphate + 2 H(+). It functions in the pathway purine metabolism; GMP biosynthesis; GMP from XMP (L-Gln route): step 1/1. Functionally, catalyzes the synthesis of GMP from XMP. This Pyrococcus horikoshii (strain ATCC 700860 / DSM 12428 / JCM 9974 / NBRC 100139 / OT-3) protein is GMP synthase [glutamine-hydrolyzing] subunit B (guaAB).